Here is a 766-residue protein sequence, read N- to C-terminus: Pentatricopeptide repeat-containing protein At3g61520, mitochondrial (766 aa).

The N-terminal 30 residues, 1–30 (MSIMLSISRRRNSYILLNHSRFLRRFSYDV), are a transit peptide targeting the mitochondrion. PPR repeat units lie at residues 151–181 (TVVA…LDSN), 184–218 (NSQV…ESVF), 221–257 (NRIT…GVSP), 258–292 (NSVW…KTPL), 293–327 (EAPP…KIRP), 328–358 (DVVT…MRGK), 369–404 (DSIH…RCAP), 405–439 (NAVT…EIKP), 440–474 (NVVT…GVKG), 475–509 (NVVT…GCSP), 510–544 (DAKI…GFSL), 545–579 (DLLA…GKKP), 580–614 (DSIT…GLDP), 615–650 (TVTT…KVNP), 651–685 (NTVI…MVRP), and 686–720 (NVET…SCEP).

It belongs to the PPR family. P subfamily.

It is found in the mitochondrion. This chain is Pentatricopeptide repeat-containing protein At3g61520, mitochondrial, found in Arabidopsis thaliana (Mouse-ear cress).